The sequence spans 147 residues: Globin (147 aa).

Residues 2 to 147 enclose the Globin domain; it reads SFSAAQVDTV…SVANGIGQYQ (146 aa). Heme b-binding residues include His64 and His95.

The protein belongs to the globin family. Homodimer or homooligomer.

The chain is Globin from Aequiyoldia eightsii (Antarctic yoldia).